Here is a 555-residue protein sequence, read N- to C-terminus: Formate--tetrahydrofolate ligase (555 aa).

Residue 65 to 72 (TPAGEGKS) participates in ATP binding.

The protein belongs to the formate--tetrahydrofolate ligase family.

It carries out the reaction (6S)-5,6,7,8-tetrahydrofolate + formate + ATP = (6R)-10-formyltetrahydrofolate + ADP + phosphate. It functions in the pathway one-carbon metabolism; tetrahydrofolate interconversion. This chain is Formate--tetrahydrofolate ligase, found in Staphylococcus aureus (strain Mu3 / ATCC 700698).